Reading from the N-terminus, the 894-residue chain is Exocyst complex component 1 (894 aa).

Coiled-coil stretches lie at residues Gly-152–Leu-199 and Gln-205–Ile-259. Positions Ser-437–Met-495 are disordered. Positions Lys-438 to Ser-459 are enriched in basic and acidic residues. Low complexity predominate over residues Leu-460–Ser-491. At Ser-470 the chain carries Phosphoserine. Thr-471 is modified (phosphothreonine). Phosphoserine is present on residues Ser-473, Ser-487, and Ser-501.

Belongs to the SEC3 family. As to quaternary structure, the exocyst complex is composed of EXOC1, EXOC2, EXOC3, EXOC4, EXOC5, EXOC6, EXOC7 and EXOC8. Interacts with EEF1A1. Interacts with SLC6A9; interaction increases the transporter capacity of SLC6A9 probably by promoting its insertion into the cell membrane.

The protein localises to the midbody. Its subcellular location is the midbody ring. It localises to the cytoplasm. It is found in the perinuclear region. The protein resides in the cell membrane. Its function is as follows. Component of the exocyst complex involved in the docking of exocytic vesicles with fusion sites on the plasma membrane. This chain is Exocyst complex component 1 (Exoc1), found in Mus musculus (Mouse).